A 157-amino-acid polypeptide reads, in one-letter code: Transcription elongation factor GreA (157 aa).

Residues 14–37 (LREELDRLLKLRPKITEAIAEARE) adopt a coiled-coil conformation.

Belongs to the GreA/GreB family.

Functionally, necessary for efficient RNA polymerase transcription elongation past template-encoded arresting sites. The arresting sites in DNA have the property of trapping a certain fraction of elongating RNA polymerases that pass through, resulting in locked ternary complexes. Cleavage of the nascent transcript by cleavage factors such as GreA or GreB allows the resumption of elongation from the new 3'terminus. GreA releases sequences of 2 to 3 nucleotides. The protein is Transcription elongation factor GreA of Vibrio cholerae serotype O1 (strain ATCC 39315 / El Tor Inaba N16961).